The primary structure comprises 1252 residues: DNA-directed RNA polymerase subunit beta (1252 aa).

This sequence belongs to the RNA polymerase beta chain family. In terms of assembly, the RNAP catalytic core consists of 2 alpha, 1 beta, 1 beta' and 1 omega subunit. When a sigma factor is associated with the core the holoenzyme is formed, which can initiate transcription.

It carries out the reaction RNA(n) + a ribonucleoside 5'-triphosphate = RNA(n+1) + diphosphate. Functionally, DNA-dependent RNA polymerase catalyzes the transcription of DNA into RNA using the four ribonucleoside triphosphates as substrates. In Chlamydia felis (strain Fe/C-56) (Chlamydophila felis), this protein is DNA-directed RNA polymerase subunit beta.